The chain runs to 86 residues: Cell division topological specificity factor (86 aa).

Belongs to the MinE family.

In terms of biological role, prevents the cell division inhibition by proteins MinC and MinD at internal division sites while permitting inhibition at polar sites. This ensures cell division at the proper site by restricting the formation of a division septum at the midpoint of the long axis of the cell. In Bordetella petrii (strain ATCC BAA-461 / DSM 12804 / CCUG 43448), this protein is Cell division topological specificity factor.